We begin with the raw amino-acid sequence, 46 residues long: Protein PsbN (46 aa).

A helical transmembrane segment spans residues 10–30 (LIITILAVTIAFTAVSLYTAF).

Belongs to the PsbN family.

It is found in the cellular thylakoid membrane. Its function is as follows. May play a role in photosystem I and II biogenesis. The chain is Protein PsbN from Acaryochloris marina (strain MBIC 11017).